The chain runs to 471 residues: 5-hydroxytryptamine receptor 2A (471 aa).

Residues 1-80 (MDILCEENTS…LQEKNWSALL (80 aa)) lie on the Extracellular side of the membrane. The N-linked (GlcNAc...) asparagine glycan is linked to Asn38. Residues 81–97 (TAVVIILTIAGNILVIM) form a helical membrane-spanning segment. The Cytoplasmic portion of the chain corresponds to 98–111 (AVSLEKKLQNATNY). A helical transmembrane segment spans residues 112–137 (FLMSLAIADMLLGFLVMPVSMLTILY). At 138–146 (GYRWPLPSK) the chain is on the extracellular side. The chain crosses the membrane as a helical span at residues 147–171 (LCAVWIYLDVLFSTASIMHLCAISL). Cys148 and Cys227 form a disulfide bridge. Asp155 lines the serotonin pocket. A DRY motif; important for ligand-induced conformation changes motif is present at residues 172–174 (DRY). The Cytoplasmic segment spans residues 172-191 (DRYVAIQNPIHHSRFNSRTK). The chain crosses the membrane as a helical span at residues 192–215 (AFLKIIAVWTISVGISMPIPVFGL). Topologically, residues 216–232 (QDDSKVFKEGSCLLADD) are extracellular. Residues 233 to 258 (NFVLIGSFVSFFIPLTIMVITYFLTI) traverse the membrane as a helical segment. Residues 259-322 (KSLQKEATLC…QSISNEQKAC (64 aa)) are Cytoplasmic-facing. At Ser280 the chain carries Phosphoserine. Residues 323 to 348 (KVLGIVFSLFVVMWCPFFITNIMAVI) traverse the membrane as a helical segment. Asn343 serves as a coordination point for serotonin. Cys349 and Cys353 are joined by a disulfide. Residues 349-356 (CKESCNED) are Extracellular-facing. Residues 357-382 (VIGALLNVFVWIGYLSSAVNPLVYTL) form a helical membrane-spanning segment. The NPxxY motif; important for ligand-induced conformation changes and signaling motif lies at 376–380 (NPLVY). Residues 383-471 (FNKTYRSAFS…DGVNEKVSCV (89 aa)) are Cytoplasmic-facing. The disordered stretch occupies residues 450–471 (KQHSEDASKDNSDGVNEKVSCV). A compositionally biased stretch (basic and acidic residues) spans 451–465 (QHSEDASKDNSDGVN). The PDZ-binding motif lies at 469 to 471 (SCV).

This sequence belongs to the G-protein coupled receptor 1 family. In terms of assembly, interacts (via C-terminus) with MPDZ and PATJ. May interact (via C-terminus) with MPP3, PRDX6, DLG4, DLG1, CASK, APBA1 and MAGI2. Interacts with GRM2 and DRD2; this may affect signaling.

It is found in the cell membrane. The protein resides in the cell projection. It localises to the dendrite. Its subcellular location is the axon. The protein localises to the cytoplasmic vesicle. It is found in the membrane. The protein resides in the caveola. It localises to the presynapse. G-protein coupled receptor activity is regulated by lipids: oleamide increases HTR2A-mediated activity. G-protein coupled receptor for 5-hydroxytryptamine (serotonin). Also functions as a receptor for various drugs and psychoactive substances, including mescaline, psilocybin, 1-(2,5-dimethoxy-4-iodophenyl)-2-aminopropane (DOI) and lysergic acid diethylamide (LSD). Ligand binding causes a conformation change that triggers signaling via guanine nucleotide-binding proteins (G proteins) and modulates the activity of downstream effectors. HTR2A is coupled to G(q)/G(11) G alpha proteins and activates phospholipase C-beta, releasing diacylglycerol (DAG) and inositol 1,4,5-trisphosphate (IP3) second messengers that modulate the activity of phosphatidylinositol 3-kinase and promote the release of Ca(2+) ions from intracellular stores, respectively. Beta-arrestin family members inhibit signaling via G proteins and mediate activation of alternative signaling pathways. Affects neural activity, perception, cognition and mood. Plays a role in the regulation of behavior, including responses to anxiogenic situations and psychoactive substances. Plays a role in intestinal smooth muscle contraction, and may play a role in arterial vasoconstriction. This Pongo pygmaeus (Bornean orangutan) protein is 5-hydroxytryptamine receptor 2A (HTR2A).